Consider the following 745-residue polypeptide: Probable GMP synthase [glutamine-hydrolyzing] (745 aa).

The disordered stretch occupies residues 1 to 37; sequence MKRSSSMLDINEDSQHSTNKAPPPKKAPEDRFDSANM. A Glutamine amidotransferase type-1 domain is found at 60–252; sequence RIAILDFGAQ…LFKVVGCCGN (193 aa). Cys138 acts as the For GATase activity in catalysis. Active-site residues include His226 and Glu228. In terms of domain architecture, GMPS ATP-PPase spans 253-461; that stretch reads FTIQNREQSC…LGLPESIVQR (209 aa). 280–286 contributes to the ATP binding site; sequence SGGVDSA. Residues Arg363, Asp563, Gln662, Lys737, and Glu743 each coordinate substrate.

Homodimer.

The enzyme catalyses XMP + L-glutamine + ATP + H2O = GMP + L-glutamate + AMP + diphosphate + 2 H(+). It functions in the pathway purine metabolism; GMP biosynthesis; GMP from XMP (L-Gln route): step 1/1. This Caenorhabditis elegans protein is Probable GMP synthase [glutamine-hydrolyzing] (gmps-1).